The chain runs to 545 residues: Bifunctional purine biosynthesis protein PurH (545 aa).

Residues 1–150 form the MGS-like domain; that stretch reads MTNTNRPIRR…KNHATVAIVT (150 aa).

The protein belongs to the PurH family.

It carries out the reaction (6R)-10-formyltetrahydrofolate + 5-amino-1-(5-phospho-beta-D-ribosyl)imidazole-4-carboxamide = 5-formamido-1-(5-phospho-D-ribosyl)imidazole-4-carboxamide + (6S)-5,6,7,8-tetrahydrofolate. It catalyses the reaction IMP + H2O = 5-formamido-1-(5-phospho-D-ribosyl)imidazole-4-carboxamide. The protein operates within purine metabolism; IMP biosynthesis via de novo pathway; 5-formamido-1-(5-phospho-D-ribosyl)imidazole-4-carboxamide from 5-amino-1-(5-phospho-D-ribosyl)imidazole-4-carboxamide (10-formyl THF route): step 1/1. Its pathway is purine metabolism; IMP biosynthesis via de novo pathway; IMP from 5-formamido-1-(5-phospho-D-ribosyl)imidazole-4-carboxamide: step 1/1. The chain is Bifunctional purine biosynthesis protein PurH from Bifidobacterium longum (strain DJO10A).